A 172-amino-acid chain; its full sequence is Type II secretion system protein H (172 aa).

Residues M1 to G6 constitute a propeptide, leader sequence. The residue at position 7 (F7) is an N-methylphenylalanine. Residues F7–V27 form a helical membrane-spanning segment.

The protein belongs to the GSP H family. Type II secretion is composed of four main components: the outer membrane complex, the inner membrane complex, the cytoplasmic secretion ATPase and the periplasm-spanning pseudopilus. Forms the tip of the type II pseudopilus by interacting with XcpV, XcpW and XcpX. Interacts with core component XcpT. In terms of processing, cleaved by prepilin peptidase. Methylated by prepilin peptidase at the amino group of the N-terminal phenylalanine once the leader sequence is cleaved by prepilin peptidase.

It localises to the cell inner membrane. In terms of biological role, component of the type II secretion system required for the energy-dependent secretion of extracellular factors such as proteases and toxins from the periplasm. Part of the pseudopilus tip complex that is critical for the recognition and binding of secretion substrates. Type II pseudopilus confers increased bacterial adhesive capabilities. This chain is Type II secretion system protein H (xcpU), found in Pseudomonas aeruginosa (strain ATCC 15692 / DSM 22644 / CIP 104116 / JCM 14847 / LMG 12228 / 1C / PRS 101 / PAO1).